Consider the following 369-residue polypeptide: MNVNGKWYRAIWPNEHDPETVEIIDQRKLPHRFEIVGLTTVKKTIQAIRDMYVRGAPLIGATGAWGVYLAVVNMKDAENPLQYLKEECFKISNARPTAVNLEWAVKAMEAAILEKSNVEDWIKAAWSKAIEITEAEVKNCRQIGVHGSPLIEEISKNKNGKTVNILTHCNAGWLACVDHGTATAPIYAAFDKGIDVHVWVDETRPLNQGSRLTAWELGQHGVPHTIITDNAGGHLMQHGKVDMVIVGTDRTTHTGDVANKVGTYLKALAAKDNNVPFYVALPSSTIDWEMKNGVKDIPIENRDPDEVRKVWGLHDGHLVDVLVPPEESPALNVAFDVTPARLVTGLITERGLCKASEEGVRSLFPDKMK.

Substrate contacts are provided by residues 54–56, Arg95, and Gln208; that span reads RGA. Residue Asp249 is the Proton donor of the active site. Position 259 to 260 (259 to 260) interacts with substrate; that stretch reads NK.

It belongs to the eIF-2B alpha/beta/delta subunits family. MtnA subfamily.

The enzyme catalyses 5-(methylsulfanyl)-alpha-D-ribose 1-phosphate = 5-(methylsulfanyl)-D-ribulose 1-phosphate. The protein operates within amino-acid biosynthesis; L-methionine biosynthesis via salvage pathway; L-methionine from S-methyl-5-thio-alpha-D-ribose 1-phosphate: step 1/6. Its function is as follows. Catalyzes the interconversion of methylthioribose-1-phosphate (MTR-1-P) into methylthioribulose-1-phosphate (MTRu-1-P). This is Methylthioribose-1-phosphate isomerase from Desulfatibacillum aliphaticivorans.